Reading from the N-terminus, the 448-residue chain is Solute carrier family 52, riboflavin transporter, member 1 (448 aa).

5 helical membrane-spanning segments follow: residues 14 to 34 (LLVA…WVEL), 47 to 67 (LPSY…VVTL), 79 to 99 (VPIQ…APLW), 124 to 144 (ACCT…PPFL), and 147 to 167 (FFLG…VQGV). The N-linked (GlcNAc...) asparagine glycan is linked to N178. The chain crosses the membrane as a helical span at residues 191-211 (FPASTFFWALTALLVTSAAAF). A disordered region spans residues 225–267 (TTGGSGPELQLGSPGAEEEEKEEEEALPLQEPPSQAAGTIPGP). Over residues 240 to 250 (AEEEEKEEEEA) the composition is skewed to acidic residues. 5 helical membrane-spanning segments follow: residues 280–300 (AFLL…LPSV), 315–335 (LAVV…MGVL), 342–362 (LVGL…LAIL), 369–389 (VGTT…LCVF), and 407–427 (ALLA…GAMF).

It belongs to the riboflavin transporter family. In terms of tissue distribution, widely expressed. Highly expressed in the testis, placenta and small intestine. Expressed at lower level in other tissues.

It is found in the cell membrane. The catalysed reaction is riboflavin(in) = riboflavin(out). With respect to regulation, the activity is strongly inhibited by riboflavin analogs, such as lumiflavin. Weakly inhibited by flavin adenine dinucleotide (FAD). In terms of biological role, plasma membrane transporter mediating the uptake by cells of the water soluble vitamin B2/riboflavin that plays a key role in biochemical oxidation-reduction reactions of the carbohydrate, lipid, and amino acid metabolism. Humans are unable to synthesize vitamin B2/riboflavin and must obtain it via intestinal absorption. Its function is as follows. (Microbial infection) May function as a cell receptor to retroviral envelopes similar to the porcine endogenous retrovirus (PERV-A). This chain is Solute carrier family 52, riboflavin transporter, member 1, found in Homo sapiens (Human).